The primary structure comprises 384 residues: Carbamoyl phosphate synthase small chain (384 aa).

The tract at residues 1–192 (MMKRIPAILV…LTDNIRVHRV (192 aa)) is CPSase. Residues Ser51, Gly244, and Gly246 each contribute to the L-glutamine site. The Glutamine amidotransferase type-1 domain occupies 196–382 (KVIVIDFGVK…IEIMTKSKNK (187 aa)). Cys272 serves as the catalytic Nucleophile. 5 residues coordinate L-glutamine: Met273, Gln276, Asn312, Gly314, and Phe315. Active-site residues include His355 and Glu357.

It belongs to the CarA family. Composed of two chains; the small (or glutamine) chain promotes the hydrolysis of glutamine to ammonia, which is used by the large (or ammonia) chain to synthesize carbamoyl phosphate. Tetramer of heterodimers (alpha,beta)4.

The protein resides in the plastid. Its subcellular location is the chloroplast. The catalysed reaction is hydrogencarbonate + L-glutamine + 2 ATP + H2O = carbamoyl phosphate + L-glutamate + 2 ADP + phosphate + 2 H(+). It carries out the reaction L-glutamine + H2O = L-glutamate + NH4(+). It participates in amino-acid biosynthesis; L-arginine biosynthesis; carbamoyl phosphate from bicarbonate: step 1/1. The protein operates within pyrimidine metabolism; UMP biosynthesis via de novo pathway; (S)-dihydroorotate from bicarbonate: step 1/3. In terms of biological role, small subunit of the glutamine-dependent carbamoyl phosphate synthetase (CPSase). CPSase catalyzes the formation of carbamoyl phosphate from the ammonia moiety of glutamine, carbonate, and phosphate donated by ATP, constituting the first step of 2 biosynthetic pathways, one leading to arginine and/or urea and the other to pyrimidine nucleotides. The small subunit (glutamine amidotransferase) binds and cleaves glutamine to supply the large subunit with the substrate ammonia. This chain is Carbamoyl phosphate synthase small chain, found in Pyropia yezoensis (Susabi-nori).